The sequence spans 276 residues: 2-dehydro-3-deoxyphosphooctonate aldolase (276 aa).

This sequence belongs to the KdsA family.

It localises to the cytoplasm. The catalysed reaction is D-arabinose 5-phosphate + phosphoenolpyruvate + H2O = 3-deoxy-alpha-D-manno-2-octulosonate-8-phosphate + phosphate. The protein operates within carbohydrate biosynthesis; 3-deoxy-D-manno-octulosonate biosynthesis; 3-deoxy-D-manno-octulosonate from D-ribulose 5-phosphate: step 2/3. It functions in the pathway bacterial outer membrane biogenesis; lipopolysaccharide biosynthesis. This is 2-dehydro-3-deoxyphosphooctonate aldolase from Xanthomonas campestris pv. campestris (strain 8004).